Reading from the N-terminus, the 1221-residue chain is Reverse gyrase subunit B (1221 aa).

Residues 56–97 (NEPVAIFGSSCVLCGGDCSSVRLTSRIGICERCLPVDTETLR) form an RG N-terminal-type zinc finger. Cys-66, Cys-69, Cys-85, and Cys-88 together coordinate Zn(2+). Residues Gln-161 and 178–185 (APTGTGKT) contribute to the ATP site. A Helicase ATP-binding domain is found at 165 to 400 (TRRLVKGCSF…AVVRELFDFE (236 aa)). Residues 284 to 287 (DDVD) carry the DEAD box motif. One can recognise a Helicase C-terminal domain in the interval 424–600 (AVERIVRKAG…PLSLNTLMKL (177 aa)). One can recognise a Toprim domain in the interval 779–935 (SALMIVESPN…QVYRTEFHEV (157 aa)). Residue Glu-785 coordinates Mg(2+). An RG C-terminal-type zinc finger spans residues 856–882 (LGRCSECGEQVVGSEECPNCGGEVELK). Zn(2+) is bound by residues Cys-859, Cys-862, Cys-872, and Cys-875. A Mg(2+)-binding site is contributed by Asp-904. One can recognise a Topo IA-type catalytic domain in the interval 953–1221 (DAGRVSAQIL…MLHLAGVSGR (269 aa)).

In the C-terminal section; belongs to the type IA topoisomerase family. This sequence in the N-terminal section; belongs to the DEAD box helicase family. DDVD subfamily. In terms of assembly, heterodimer of an RgyrA and RgyrB subunit. The topoisomerase domain is shared between the two subunits. Zn(2+) serves as cofactor. Mg(2+) is required as a cofactor. Post-translationally, the N-terminus is partially blocked.

It is found in the cytoplasm. The enzyme catalyses ATP + H2O = ADP + phosphate + H(+). In terms of biological role, modifies the topological state of DNA by introducing positive supercoils in an ATP-dependent process; dATP also allows positive supercoiling. Increases the linking number in steps of +1. Only this subunit binds ATP, it does so in a DNA- and RgyA-independent manner. Hydrolyzes ATP only in the presence of DNA. The RgyA subunit transiently cleaves a single DNA strand and remains covalently bound to the 5' DNA end probably through a tyrosine residue. It changes linking number in steps of one, and nicks DNA preferentially at 5'-CNNN | 3'-sites with a strong preference for 4 pyrimidine residues. There are about 1000 heterodimers per cell. May be involved in rewinding the DNA strands in the regions of the chromosome that have opened up to allow transcription or replication. Its function is as follows. This subunit expressed in E.coli only has DNA-dependent ATPase activity at 80 degrees Celsius. Reverse gyrase activity is reconstituted after incubation at 80 degrees Celsius for 5 minutes, positive supercoiling requires ATP and Mg(2+). In the presence of ATP it binds and nicks substrate but does not make closed product. The protein is Reverse gyrase subunit B of Methanopyrus kandleri (strain AV19 / DSM 6324 / JCM 9639 / NBRC 100938).